Reading from the N-terminus, the 40-residue chain is Large ribosomal subunit protein bL36 (40 aa).

This sequence belongs to the bacterial ribosomal protein bL36 family.

This is Large ribosomal subunit protein bL36 from Corynebacterium diphtheriae (strain ATCC 700971 / NCTC 13129 / Biotype gravis).